Reading from the N-terminus, the 96-residue chain is Protein transport protein Sec61 subunit beta (96 aa).

Positions 1 to 17 (MPGPTPSGTNVGSSGRS) are enriched in polar residues. Residues 1–54 (MPGPTPSGTNVGSSGRSPSKAVAARAAGSTVRQRKNASCGTRSAGRTTSAGTGG) form a disordered region. Proline 2 carries the post-translational modification N-acetylproline. The Cytoplasmic segment spans residues 2–70 (PGPTPSGTNV…EDSPGLKVGP (69 aa)). Serine 7 is modified (phosphoserine). Threonine 9 carries the phosphothreonine modification. 3 positions are modified to phosphoserine: serine 13, serine 14, and serine 17. A lipid anchor (S-palmitoyl cysteine) is attached at cysteine 39. Residues 40–50 (GTRSAGRTTSA) show a composition bias toward low complexity. The chain crosses the membrane as a helical span at residues 71-91 (VPVLVMSLLFIAAVFMLHIWG).

Belongs to the SEC61-beta family. The SEC61 channel-forming translocon complex consists of channel-forming core components SEC61A1, SEC61B and SEC61G and different auxiliary components such as SEC62 and SEC63. The SEC61 channel associates with the multi-pass translocon (MPT) complex. Interacts with TRAM1.

Its subcellular location is the endoplasmic reticulum membrane. Component of SEC61 channel-forming translocon complex that mediates transport of signal peptide-containing precursor polypeptides across the endoplasmic reticulum (ER). Forms a ribosome receptor and a gated pore in the ER membrane, both functions required for cotranslational translocation of nascent polypeptides. The SEC61 channel is also involved in ER membrane insertion of transmembrane proteins: it mediates membrane insertion of the first few transmembrane segments of proteins, while insertion of subsequent transmembrane regions of multi-pass membrane proteins is mediated by the multi-pass translocon (MPT) complex. The SEC61 channel cooperates with the translocating protein TRAM1 to import nascent proteins into the ER. Required for PKD1/Polycystin-1 biogenesis. The sequence is that of Protein transport protein Sec61 subunit beta from Mus musculus (Mouse).